Here is a 595-residue protein sequence, read N- to C-terminus: MSTISINLMSIIRNPLHSKSKRALINKHPSSSASRLVQPCRISSKIDTKPAEITRRSGNYEPSLWDFDYLQSLNTHHHYKKEEQLKREEELIVQVKMLLGTKMEAVEQLELIDDLKNLGLSYFFRDEIKKILTSIYNNSFENNNKVGDLYFTALGFRLLRQHGFNVSQRIFDCFKNEKGSHFDETLIGEDIKATLQLYEASFHLREGENTLELARQISTKYLQKMVDEGRINDENLSSWIRHSLDLPLHWRIQRLEARWFLDAYAVREDKNPLIFELAKLDFNIIQATQQEELKEVSRWWNDSCLAEKLPFLRDRIVEAYFWGVALFELLEFGYQRKITAIIIILVTAIDDVYDVYGTLDELQLFTDVIRRWNTQSIDQLPYYMQLCYMTLYNYVSNLGYEILKDRGINTIPHIHQSWVSLVEAFLKEEEWYESGYTPSLKEYLNNASISVGAIAVVIALELSIPNSTIHHRTRIDHRHKILHLSGLVSRLANDLGTAQHEMEKGNVPTAIQCYMKDTNASEEEAWEHVRFMIGEAWKRLNTAMAEADDCPFTEQAVEAAANFGRAAQFIYREGDGHGHFQIHQHVENLFFHPYV.

Residues 1–32 (MSTISINLMSIIRNPLHSKSKRALINKHPSSS) constitute a chloroplast transit peptide. D350 and D354 together coordinate Mn(2+). The short motif at 350–354 (DDVYD) is the DDXXD motif element. Homodimerization stretches follow at residues 356 to 362 (YGTLDEL) and 428 to 465 (EEEW…LSIP). Residues N493 and E501 each contribute to the Mn(2+) site.

Belongs to the terpene synthase family. Homodimer. Mn(2+) serves as cofactor. Requires Mg(2+) as cofactor. Expressed in peltate glandular trichomes. Present in flowers, leaves and stems.

Its subcellular location is the plastid. It is found in the chloroplast. The enzyme catalyses (2E)-geranyl diphosphate = (E)-beta-ocimene + diphosphate. Its pathway is secondary metabolite biosynthesis; terpenoid biosynthesis. In terms of biological role, involved in the biosynthesis of monoterpenes natural products. Monoterpene synthase that catalyzes mainly the formation of (E)-beta-ocimene and minor amounts of other monoterpenes (e.g. myrcene, (Z)-beta-ocimene, alpha- and gamma-terpinene) from geranyl diphosphate (GPP). The polypeptide is (E)-beta-ocimene synthase, chloroplastic (Origanum vulgare (Wild marjoram)).